Reading from the N-terminus, the 244-residue chain is UPF0173 metal-dependent hydrolase Rcas_3617 (244 aa).

Belongs to the UPF0173 family.

This Roseiflexus castenholzii (strain DSM 13941 / HLO8) protein is UPF0173 metal-dependent hydrolase Rcas_3617.